A 202-amino-acid polypeptide reads, in one-letter code: Large ribosomal subunit protein bL9 (202 aa).

Residues Ala-177 to Lys-202 form a disordered region. A compositionally biased stretch (acidic residues) spans Phe-181–Ala-191.

This sequence belongs to the bacterial ribosomal protein bL9 family.

In terms of biological role, binds to the 23S rRNA. In Nitrobacter hamburgensis (strain DSM 10229 / NCIMB 13809 / X14), this protein is Large ribosomal subunit protein bL9.